The chain runs to 464 residues: Colanic acid biosynthesis protein WcaM (464 aa).

The protein operates within slime biogenesis; slime polysaccharide biosynthesis. The sequence is that of Colanic acid biosynthesis protein WcaM (wcaM) from Shigella flexneri.